The following is a 209-amino-acid chain: Thymidylate kinase (209 aa).

10–17 contacts ATP; that stretch reads GPDGAGKT.

It belongs to the thymidylate kinase family.

The enzyme catalyses dTMP + ATP = dTDP + ADP. Phosphorylation of dTMP to form dTDP in both de novo and salvage pathways of dTTP synthesis. This chain is Thymidylate kinase, found in Pediococcus pentosaceus (strain ATCC 25745 / CCUG 21536 / LMG 10740 / 183-1w).